The chain runs to 286 residues: ATP synthase gamma chain (286 aa).

This sequence belongs to the ATPase gamma chain family. F-type ATPases have 2 components, CF(1) - the catalytic core - and CF(0) - the membrane proton channel. CF(1) has five subunits: alpha(3), beta(3), gamma(1), delta(1), epsilon(1). CF(0) has three main subunits: a, b and c.

It localises to the cell inner membrane. Its function is as follows. Produces ATP from ADP in the presence of a proton gradient across the membrane. The gamma chain is believed to be important in regulating ATPase activity and the flow of protons through the CF(0) complex. In Teredinibacter turnerae (strain ATCC 39867 / T7901), this protein is ATP synthase gamma chain.